A 394-amino-acid polypeptide reads, in one-letter code: Alpha-2B adrenergic receptor (394 aa).

The chain crosses the membrane as a helical span at residues 1-25 (AIAAVITFLILFTIFGNALVILAVL). Residues 26-36 (TSRSLRAPQNL) are Cytoplasmic-facing. The chain crosses the membrane as a helical span at residues 37-62 (FLVSLAAADILVATLIIPFSLANELL). Topologically, residues 63–72 (GYWYFRRTWC) are extracellular. Cysteine 72 and cysteine 151 form a disulfide bridge. The helical transmembrane segment at 73–95 (EVYLALDVLFCTSSIVHLCAISL) threads the bilayer. The Cytoplasmic portion of the chain corresponds to 96–117 (DRYWAVSRALEYNCKRTPRRIK). Residues 118 to 140 (CIILTVWLIAAAISLPPLIYKGD) form a helical membrane-spanning segment. Over 141 to 156 (QGPQPHGAPQCKLNQE) the chain is Extracellular. Residues 157-180 (AWYILSSSLGSFFVPCLIMILVYL) form a helical membrane-spanning segment. The Cytoplasmic segment spans residues 181 to 358 (RIYLIAKRSH…LSREKRFTFV (178 aa)). A disordered region spans residues 191–318 (RRGPRAKGGP…GSPPLQQPQG (128 aa)). Residues 281 to 298 (LEEEAEEEEEEEEEEDEP) show a composition bias toward acidic residues. The segment covering 299 to 312 (QAVPVSPASVGSPP) has biased composition (low complexity). The chain crosses the membrane as a helical span at residues 359 to 382 (LAVVIGVFVLCWFPFFFSYSLSAI). The Extracellular portion of the chain corresponds to 383 to 391 (CPQQCRVPH). The chain crosses the membrane as a helical span at residues 392–394 (GLF).

This sequence belongs to the G-protein coupled receptor 1 family. Adrenergic receptor subfamily. ADRA2B sub-subfamily. In terms of assembly, interacts with RAB26. Interacts with PPP1R9B. Interacts with GGA1, GGA2 and GGA3.

It localises to the cell membrane. Functionally, alpha-2 adrenergic receptors mediate the catecholamine-induced inhibition of adenylate cyclase through the action of G proteins. In Oryctolagus cuniculus (Rabbit), this protein is Alpha-2B adrenergic receptor (ADRA2B).